A 340-amino-acid polypeptide reads, in one-letter code: Sesquiterpene synthase 6 (340 aa).

4 residues coordinate Mg(2+): Asp90, Asn229, Ser233, and Glu237. The DDXXD motif signature appears at 90-94 (DDITD). An NSE/DTE motif motif is present at residues 229 to 237 (NDIYSFNNE). Arg316 and Tyr317 together coordinate (2E,6E)-farnesyl diphosphate.

It belongs to the terpene synthase family. Mg(2+) is required as a cofactor.

It catalyses the reaction (2E,6E)-farnesyl diphosphate = delta-cadinene + diphosphate. It carries out the reaction (2E,6E)-farnesyl diphosphate = bicyclogermacrene + diphosphate. In terms of biological role, terpene cyclase that catalyzes the cyclization of farnesyl diphosphate (FPP) to various sesquiterpenes, including bicycloelemene, alpha-gurjunene, 9-epi-caryophylene, bicyclosesquiphellandrene, bicyclogermacrene and delta-cadinene. This chain is Sesquiterpene synthase 6, found in Postia placenta (strain ATCC 44394 / Madison 698-R) (Brown rot fungus).